The sequence spans 458 residues: Bifunctional protein GlmU (458 aa).

Residues 1-232 (MISPLSVIIL…TFEIEGVNNR (232 aa)) form a pyrophosphorylase region. Residues 10-13 (LAAG), Lys24, Gln79, 84-85 (GT), 106-108 (YGD), Gly142, Glu157, Asn172, and Asn230 contribute to the UDP-N-acetyl-alpha-D-glucosamine site. Asp108 contributes to the Mg(2+) binding site. Position 230 (Asn230) interacts with Mg(2+). Residues 233–253 (QQLASLERTWQGKLVADLQEA) are linker. The tract at residues 254–458 (GVQFADPTRV…KDNFQRPTKK (205 aa)) is N-acetyltransferase. Arg336 and Lys354 together coordinate UDP-N-acetyl-alpha-D-glucosamine. His366 functions as the Proton acceptor in the catalytic mechanism. UDP-N-acetyl-alpha-D-glucosamine contacts are provided by Tyr369 and Asn380. Acetyl-CoA contacts are provided by residues Ala383, 389–390 (NY), Ser408, Ala426, and Arg443.

The protein in the N-terminal section; belongs to the N-acetylglucosamine-1-phosphate uridyltransferase family. This sequence in the C-terminal section; belongs to the transferase hexapeptide repeat family. In terms of assembly, homotrimer. It depends on Mg(2+) as a cofactor.

The protein localises to the cytoplasm. The catalysed reaction is alpha-D-glucosamine 1-phosphate + acetyl-CoA = N-acetyl-alpha-D-glucosamine 1-phosphate + CoA + H(+). The enzyme catalyses N-acetyl-alpha-D-glucosamine 1-phosphate + UTP + H(+) = UDP-N-acetyl-alpha-D-glucosamine + diphosphate. The protein operates within nucleotide-sugar biosynthesis; UDP-N-acetyl-alpha-D-glucosamine biosynthesis; N-acetyl-alpha-D-glucosamine 1-phosphate from alpha-D-glucosamine 6-phosphate (route II): step 2/2. Its pathway is nucleotide-sugar biosynthesis; UDP-N-acetyl-alpha-D-glucosamine biosynthesis; UDP-N-acetyl-alpha-D-glucosamine from N-acetyl-alpha-D-glucosamine 1-phosphate: step 1/1. It participates in bacterial outer membrane biogenesis; LPS lipid A biosynthesis. Functionally, catalyzes the last two sequential reactions in the de novo biosynthetic pathway for UDP-N-acetylglucosamine (UDP-GlcNAc). The C-terminal domain catalyzes the transfer of acetyl group from acetyl coenzyme A to glucosamine-1-phosphate (GlcN-1-P) to produce N-acetylglucosamine-1-phosphate (GlcNAc-1-P), which is converted into UDP-GlcNAc by the transfer of uridine 5-monophosphate (from uridine 5-triphosphate), a reaction catalyzed by the N-terminal domain. The polypeptide is Bifunctional protein GlmU (Psychrobacter arcticus (strain DSM 17307 / VKM B-2377 / 273-4)).